Here is a 1050-residue protein sequence, read N- to C-terminus: Toluene efflux pump membrane transporter TtgB (1050 aa).

Transmembrane regions (helical) follow at residues 10-30, 339-359, 370-390, 393-413, 440-460, 472-492, 539-559, 871-891, 893-913, 923-943, 972-992, and 1004-1024; these read IFAW…ILKL, GVIH…YLFL, MTVP…GFSI, LTMF…IVVV, GALV…AFFG, ITIV…TPAL, VPFL…FARI, MPAL…ALYE, WSIP…ALIA, VYFL…AILI, IIMT…ASGA, and VIGG…LFFV.

It belongs to the resistance-nodulation-cell division (RND) (TC 2.A.6) family.

The protein resides in the cell inner membrane. In terms of biological role, the inner membrane transporter component of a constitutive organic solvent efflux system. Involved in export of toluene, styrene, m-xylene, propylbenzene and ethylbenzene. Also exports AMP and the antibiotics carbenicillin, nalidixic acid, chloramphenicol and tetracycline. In Pseudomonas putida (strain DOT-T1E), this protein is Toluene efflux pump membrane transporter TtgB (ttgB).